The sequence spans 206 residues: Holliday junction branch migration complex subunit RuvA (206 aa).

Positions M1–L68 are domain I. The tract at residues E69–A147 is domain II. The flexible linker stretch occupies residues A147–R151. Residues A152–G206 form a domain III region.

The protein belongs to the RuvA family. In terms of assembly, homotetramer. Forms an RuvA(8)-RuvB(12)-Holliday junction (HJ) complex. HJ DNA is sandwiched between 2 RuvA tetramers; dsDNA enters through RuvA and exits via RuvB. An RuvB hexamer assembles on each DNA strand where it exits the tetramer. Each RuvB hexamer is contacted by two RuvA subunits (via domain III) on 2 adjacent RuvB subunits; this complex drives branch migration. In the full resolvosome a probable DNA-RuvA(4)-RuvB(12)-RuvC(2) complex forms which resolves the HJ.

It localises to the cytoplasm. In terms of biological role, the RuvA-RuvB-RuvC complex processes Holliday junction (HJ) DNA during genetic recombination and DNA repair, while the RuvA-RuvB complex plays an important role in the rescue of blocked DNA replication forks via replication fork reversal (RFR). RuvA specifically binds to HJ cruciform DNA, conferring on it an open structure. The RuvB hexamer acts as an ATP-dependent pump, pulling dsDNA into and through the RuvAB complex. HJ branch migration allows RuvC to scan DNA until it finds its consensus sequence, where it cleaves and resolves the cruciform DNA. The polypeptide is Holliday junction branch migration complex subunit RuvA (Gloeobacter violaceus (strain ATCC 29082 / PCC 7421)).